The chain runs to 120 residues: Chaperonin GroEL (120 aa).

23 to 27 (DGTTT) serves as a coordination point for ATP.

Belongs to the chaperonin (HSP60) family. Forms a cylinder of 14 subunits composed of two heptameric rings stacked back-to-back. Interacts with the co-chaperonin GroES.

The protein localises to the cytoplasm. It catalyses the reaction ATP + H2O + a folded polypeptide = ADP + phosphate + an unfolded polypeptide.. Its function is as follows. Together with its co-chaperonin GroES, plays an essential role in assisting protein folding. The GroEL-GroES system forms a nano-cage that allows encapsulation of the non-native substrate proteins and provides a physical environment optimized to promote and accelerate protein folding. This chain is Chaperonin GroEL, found in Mycolicibacterium pulveris (Mycobacterium pulveris).